The sequence spans 629 residues: 1-deoxy-D-xylulose-5-phosphate synthase (629 aa).

Thiamine diphosphate contacts are provided by residues His79 and 119–121 (SHA). Asp150 is a binding site for Mg(2+). Thiamine diphosphate contacts are provided by residues 151-152 (GS), Asn180, Tyr292, and Glu377. Asn180 contributes to the Mg(2+) binding site.

Belongs to the transketolase family. DXPS subfamily. In terms of assembly, homodimer. Mg(2+) serves as cofactor. It depends on thiamine diphosphate as a cofactor.

The catalysed reaction is D-glyceraldehyde 3-phosphate + pyruvate + H(+) = 1-deoxy-D-xylulose 5-phosphate + CO2. It participates in metabolic intermediate biosynthesis; 1-deoxy-D-xylulose 5-phosphate biosynthesis; 1-deoxy-D-xylulose 5-phosphate from D-glyceraldehyde 3-phosphate and pyruvate: step 1/1. Catalyzes the acyloin condensation reaction between C atoms 2 and 3 of pyruvate and glyceraldehyde 3-phosphate to yield 1-deoxy-D-xylulose-5-phosphate (DXP). In Tropheryma whipplei (strain TW08/27) (Whipple's bacillus), this protein is 1-deoxy-D-xylulose-5-phosphate synthase.